A 417-amino-acid polypeptide reads, in one-letter code: Serine hydroxymethyltransferase (417 aa).

An N6-acetyllysine modification is found at Lys54. (6S)-5,6,7,8-tetrahydrofolate-binding positions include Leu121 and 125–127; that span reads GHL. Position 229 is an N6-(pyridoxal phosphate)lysine (Lys229). An N6-acetyllysine mark is found at Lys250, Lys285, and Lys354. 355–357 is a binding site for (6S)-5,6,7,8-tetrahydrofolate; the sequence is SPF. Lys375 is subject to N6-acetyllysine.

It belongs to the SHMT family. Homodimer. Requires pyridoxal 5'-phosphate as cofactor.

Its subcellular location is the cytoplasm. The enzyme catalyses (6R)-5,10-methylene-5,6,7,8-tetrahydrofolate + glycine + H2O = (6S)-5,6,7,8-tetrahydrofolate + L-serine. Its pathway is one-carbon metabolism; tetrahydrofolate interconversion. It participates in amino-acid biosynthesis; glycine biosynthesis; glycine from L-serine: step 1/1. Catalyzes the reversible interconversion of serine and glycine with tetrahydrofolate (THF) serving as the one-carbon carrier. This reaction serves as the major source of one-carbon groups required for the biosynthesis of purines, thymidylate, methionine, and other important biomolecules. Also exhibits THF-independent aldolase activity toward beta-hydroxyamino acids, producing glycine and aldehydes, via a retro-aldol mechanism. This Escherichia coli O157:H7 protein is Serine hydroxymethyltransferase.